Here is a 600-residue protein sequence, read N- to C-terminus: Rhesus-like glycoprotein B (600 aa).

Residues 1–16 (MSKDEHKLPLSKRKES) lie on the Cytoplasmic side of the membrane. Residues 17–37 (IIFMMILFAFQVFMVVLFSVW) form a helical membrane-spanning segment. The Extracellular portion of the chain corresponds to 38 to 73 (VRYSKNEVNYSTLTPEQLQELEATGGVVQEEVTNIY). N-linked (GlcNAc...) asparagine glycosylation is present at N46. A helical membrane pass occupies residues 74–94 (GYFRDINIMIFFGFGFLMTFL). Over 95–102 (RRYGYSAL) the chain is Cytoplasmic. Residues 103 to 123 (GYTFIISALVAQWSVLIYGFF) form a helical membrane-spanning segment. The Extracellular portion of the chain corresponds to 124–145 (ETVDHKNDHGGDYASTFEMSQT). A helical membrane pass occupies residues 146–166 (VLLQGLFCAGAVMISYGAVLG). At 167 to 170 (RVTP) the chain is on the cytoplasmic side. A helical membrane pass occupies residues 171-191 (LQMLVVGIFEPIFYFLNMFIG). At 192–199 (EMNLEAID) the chain is on the extracellular side. Residues 200–220 (VGGGMYIHLFGSVFGLTIAWF) traverse the membrane as a helical segment. Topologically, residues 221–240 (LTDKKSKDCEDNSPSYTGDY) are cytoplasmic. The chain crosses the membrane as a helical span at residues 241–261 (FAMAGTLFLWMMWPSFNAAIA). Over 262–274 (PLGEPQFRAIANT) the chain is Extracellular. Residues 275 to 295 (FLSLTASTIATFIVTRLFGHL) form a helical membrane-spanning segment. The Cytoplasmic segment spans residues 296-303 (GHKIDMVH). A helical transmembrane segment spans residues 304–323 (VQNSSLAGGVVQGCLAHMNI). The Extracellular segment spans residues 324-325 (NP). Residues 326-346 (GGAIGMGFLAGVISVIGYLFI) form a helical membrane-spanning segment. Residues 347–361 (SPFLQRRFNIQDTCG) lie on the Cytoplasmic side of the membrane. A helical transmembrane segment spans residues 362 to 382 (IHNLHFMPGFIGSIAACIAAW). Over 383-411 (KGLNDRSLYNPIEFNQIFRAGEDQARNNA) the chain is Extracellular. The chain crosses the membrane as a helical span at residues 412 to 432 (AATFISIGIAIAGGLFVGMIL). Over 433-600 (KALKKVGGLK…SSTNSPTSKV (168 aa)) the chain is Cytoplasmic. Residues 471–600 (NLPMPTTDNG…SSTNSPTSKV (130 aa)) form a disordered region. Positions 498-510 (NKKENGYRRDLIR) are enriched in basic and acidic residues. The span at 519-529 (EQSTDSSYSDS) shows a compositional bias: low complexity. Over residues 540–554 (RIRKLAKKSYRRSKK) the composition is skewed to basic residues. Over residues 555 to 566 (SHSEHQPQHQPE) the composition is skewed to basic and acidic residues. The segment covering 571 to 580 (NNNNNNNNNN) has biased composition (low complexity). Polar residues predominate over residues 581–600 (ATAETTDNGGSSTNSPTSKV).

Belongs to the ammonium transporter (TC 2.A.49) family. Rh subfamily.

It is found in the membrane. May be a carbon dioxide/bicarbonate transporter. This is Rhesus-like glycoprotein B (rhgB) from Dictyostelium discoideum (Social amoeba).